A 131-amino-acid polypeptide reads, in one-letter code: D-ribose pyranase (131 aa).

Residue histidine 20 is the Proton donor of the active site. Substrate is bound by residues aspartate 28, histidine 98, and 120–122; that span reads YSN.

The protein belongs to the RbsD / FucU family. RbsD subfamily. In terms of assembly, homodecamer.

The protein resides in the cytoplasm. The enzyme catalyses beta-D-ribopyranose = beta-D-ribofuranose. It functions in the pathway carbohydrate metabolism; D-ribose degradation; D-ribose 5-phosphate from beta-D-ribopyranose: step 1/2. Its function is as follows. Catalyzes the interconversion of beta-pyran and beta-furan forms of D-ribose. This chain is D-ribose pyranase, found in Lactiplantibacillus plantarum (strain ATCC BAA-793 / NCIMB 8826 / WCFS1) (Lactobacillus plantarum).